We begin with the raw amino-acid sequence, 1481 residues long: MAFSFGNAGGGGGGVTQGKDLEVIQTEGLGFLALAGDAKVQLTSKWSPPPAPTASLLSIASRKGLVAAAGPDAVHVATTESVRKAFLAEKNGDSEVRPFNPEAKLPLPLRISQLAFTADEQYLVLSAETGGGLRAYDVNSLTQGNTQSAFELATNGETLRQLAPNPMPESAAFCAIVTTNGNLYMANLAERTLVSGPNGPTLRSQVSCAAWSTKGKQLVAGMADGSIYQMTPDGTEKAHIPKPPNLGDYHVSSVVWLENNVFLTIHNPTNSTNPDDKTVYHVITRQQSSGSPPNFTFQKLNDPVEPFVADKTPHHTVLRLKDFPPNLQDLLLVSSTAVETIGLLTRSKTPLATDKPADAITNVFTTTELADDSRRAQLPMSEDMMETYPIGVALDLSSKEKVYKPIPTDEEIEYSPGPLPGLWVLNNEGVLASWWVVYNESIRAGTTYSGIGGSSEVIPASPAPALASSTAPVPAFASPVSKPTFGSPSPATPAFGGPSALGTKASPWATAGGAASSTPTFGQPSFGKPAAPAFGQASFPGLGQKVSPWATGSTTSAAPAFGQSGFASAGTAPGKVFGSSFTAPSSGGFASFATKSGFASLSAPSGGSSIFSSKPGAPLTSAAPEVSMDTDTAFPPPSTKTDKPAFGSSPFVLGSTFKADPTAAHDIEKPKEGESKSLFDTGFGLSLEDAAKQPASAAESKDEEMRSTTPPLPPPTETKPKSIFESTTPTTTPAPQKFEFKTTTPSGFSTLLGSTKPVASSMPNIFATPKPTSAEKPKSIFDTLKPKEESKENLLKASEPPLPPDTTSKAVFQPGSSSSESAESSPGAAAKAAFKVGNDETPKPQKELAPKPEAVPLPPDFVKAKPKTEAKETKAEEPAVSPNLPVKPLAKKAEPIPAVPESASEEEQGQAEEEEAESGEEEEEEEEEGEGEEEEEEEEEEEEEEEEGEEGEEQSEAGSEGSGVDVAKDLSPTAKFGSMTPGYTPHTSLGGMAESTFSTISRSEVAEQSRPLFGEITKNAPPLFPAAGPLPVSPRSPSPVRGVVRSSILRPTETPRPVDTTPVPSRKGLLQKTASFGMSTGQKPAVDPNVKAQRKLAEKLKAEEQVLVDPEDEGIQQILQSKVEPTLRMNEFLAVDTKLAPMKPGRDDVPNACETLWRDINRMIDRLGLNSRSLQSFILGHTSHGKPGGRQKDDLEKPDDWVLIEAYDLGDMIDNKLARELEAGRIKDVEGTMAAIHNLGRDLAKLRAKEEDLRKLFNAQVDPDQIALTKALPLSAEQLAQQNELRRSYASFSKLLTEAEEALTVLKAKLASANAARGRRGAGAAQVPTVDAIIRTINKMTSMAEKRSGDIDVLESQMRKLRIGSLGPAGTPNGNGVGAGTVVPATPGGGGRSRESSPFVTPQSSRRAMFMSPGSVGTATPRGLLAATGTPSPTKKKLSMYTAEEKRELRAREAKRKATLRMLRESLARVGPNVVRLRDDD.

WD repeat units follow at residues Pro106 to Thr146 and Thr201 to Pro241. PXFG repeat units lie at residues Pro483–Gly486, Pro493–Gly496, Pro519–Gly522, Pro524–Gly527, Pro532–Gly535, and Pro559–Gly562. Residues Gly607–Gly616 are compositionally biased toward low complexity. Disordered regions lie at residues Gly607 to Gly647 and Thr662 to Gly991. A PXFG 7 repeat occupies Pro644–Gly647. A compositionally biased stretch (basic and acidic residues) spans Ala663–Ser677. 2 stretches are compositionally biased toward polar residues: residues Phe724–Ala734 and Lys741–Pro763. Positions Ser773–Leu794 are enriched in basic and acidic residues. Residues Pro814–Ala833 show a composition bias toward low complexity. Composition is skewed to basic and acidic residues over residues Gly837–Pro850 and Val862–Glu877. Acidic residues predominate over residues Ala903–Ser955. Coiled coils occupy residues Ala903–Ala957 and Met1233–Gly1318. The short motif at Glu1345–Asp1352 is the Bipartite nuclear localization signal element. Disordered regions lie at residues Ala1385–Ser1404 and Gly1414–Ala1443. The Bipartite nuclear localization signal motif lies at Lys1435–Thr1442.

In terms of assembly, component of the nuclear pore complex (NPC). NPC constitutes the exclusive means of nucleocytoplasmic transport. NPCs allow the passive diffusion of ions and small molecules and the active, nuclear transport receptor-mediated bidirectional transport of macromolecules such as proteins, RNAs, ribonucleoparticles (RNPs), and ribosomal subunits across the nuclear envelope. Due to its 8-fold rotational symmetry, all subunits are present with 8 copies or multiples thereof.

The protein localises to the nucleus. It localises to the nuclear pore complex. It is found in the nucleus membrane. In terms of biological role, functions as a component of the nuclear pore complex (NPC). NPC components, collectively referred to as nucleoporins (NUPs), can play the role of both NPC structural components and of docking or interaction partners for transiently associated nuclear transport factors. Active directional transport is assured by both, a Phe-Gly (FG) repeat affinity gradient for these transport factors across the NPC and a transport cofactor concentration gradient across the nuclear envelope (GSP1 and GSP2 GTPases associated predominantly with GTP in the nucleus, with GDP in the cytoplasm). NUP159 plays an important role in several nuclear export pathways including poly(A)+ RNA, pre-ribosome, and protein export. The sequence is that of Nucleoporin NUP159 (NUP159) from Chaetomium thermophilum (strain DSM 1495 / CBS 144.50 / IMI 039719) (Thermochaetoides thermophila).